The primary structure comprises 163 residues: Centrosomal protein of 19 kDa (163 aa).

This sequence belongs to the CEP19 family. As to quaternary structure, interacts with CEP43; this interaction is required for its localization to the mother centriole. Interacts (via residues 121-150) with RABL2B. Interacts (via C-terminus) with CEP350; this interaction is required for its localization to the mother centriole.

It is found in the cytoplasm. The protein localises to the cytoskeleton. The protein resides in the microtubule organizing center. It localises to the centrosome. Its subcellular location is the centriole. It is found in the spindle pole. The protein localises to the cilium basal body. Its function is as follows. Required for ciliation. Recruits the RABL2B GTPase to the ciliary base to initiate ciliation. After specifically capturing the activated GTP-bound RABL2B, the CEP19-RABL2B complex binds intraflagellar transport (IFT) complex B from the large pool pre-docked at the base of the cilium and thus triggers its entry into the cilia. Involved in the early steps in cilia formation by recruiting the ciliary vesicles (CVs) to the distal end of the mother centriole where they fuse to initiate cilium assembly. Involved in microtubule (MT) anchoring to the centrosomes. This chain is Centrosomal protein of 19 kDa (CEP19), found in Homo sapiens (Human).